A 362-amino-acid chain; its full sequence is Glutamate 5-kinase (362 aa).

Lys3 is a binding site for ATP. Ser43, Asp128, and Asn140 together coordinate substrate. ATP contacts are provided by residues Thr160–Asp161 and Thr202–Lys208. The region spanning Ala267 to Ser348 is the PUA domain.

It belongs to the glutamate 5-kinase family.

It is found in the cytoplasm. The catalysed reaction is L-glutamate + ATP = L-glutamyl 5-phosphate + ADP. It functions in the pathway amino-acid biosynthesis; L-proline biosynthesis; L-glutamate 5-semialdehyde from L-glutamate: step 1/2. Its function is as follows. Catalyzes the transfer of a phosphate group to glutamate to form L-glutamate 5-phosphate. This is Glutamate 5-kinase from Xanthomonas oryzae pv. oryzae (strain KACC10331 / KXO85).